A 234-amino-acid polypeptide reads, in one-letter code: Carbohydrate deacetylase (234 aa).

The Mg(2+) site is built by histidine 60 and histidine 123.

Belongs to the YdjC deacetylase family. It depends on Mg(2+) as a cofactor.

Its function is as follows. Probably catalyzes the deacetylation of acetylated carbohydrates an important step in the degradation of oligosaccharides. This is Carbohydrate deacetylase from Bacillus anthracis.